A 257-amino-acid chain; its full sequence is Imidazole glycerol phosphate synthase subunit HisF (257 aa).

Catalysis depends on residues aspartate 11 and aspartate 130.

The protein belongs to the HisA/HisF family. In terms of assembly, heterodimer of HisH and HisF.

It localises to the cytoplasm. The enzyme catalyses 5-[(5-phospho-1-deoxy-D-ribulos-1-ylimino)methylamino]-1-(5-phospho-beta-D-ribosyl)imidazole-4-carboxamide + L-glutamine = D-erythro-1-(imidazol-4-yl)glycerol 3-phosphate + 5-amino-1-(5-phospho-beta-D-ribosyl)imidazole-4-carboxamide + L-glutamate + H(+). It participates in amino-acid biosynthesis; L-histidine biosynthesis; L-histidine from 5-phospho-alpha-D-ribose 1-diphosphate: step 5/9. Its function is as follows. IGPS catalyzes the conversion of PRFAR and glutamine to IGP, AICAR and glutamate. The HisF subunit catalyzes the cyclization activity that produces IGP and AICAR from PRFAR using the ammonia provided by the HisH subunit. This chain is Imidazole glycerol phosphate synthase subunit HisF, found in Afipia carboxidovorans (strain ATCC 49405 / DSM 1227 / KCTC 32145 / OM5) (Oligotropha carboxidovorans).